A 66-amino-acid polypeptide reads, in one-letter code: KEGYIVDYHTGCKYTCAKLGDNDYCVRECRLRYYQSAHGYCYAFACWCTHLYEAAVVWPLPNKRCK.

The LCN-type CS-alpha/beta domain occupies Lys-1–Lys-66. Cystine bridges form between Cys-12-Cys-65, Cys-16-Cys-41, Cys-25-Cys-46, and Cys-29-Cys-48. Residue Lys-66 is modified to Lysine amide.

In terms of tissue distribution, expressed by the venom gland.

The protein localises to the secreted. In terms of biological role, beta toxins bind voltage independently at site-4 of sodium channels (Nav) and shift the activation voltage toward more negative potentials, thereby affecting sodium channel activation CC and promoting spontaneous and repetitive firing. The sequence is that of Beta-toxin ChFII.9 from Centruroides hirsutipalpus (Scorpion).